Consider the following 195-residue polypeptide: CASP-like protein 1E2 (195 aa).

At 1–29 the chain is on the cytoplasmic side; that stretch reads MEVESKTSFGGMESKSKEVKVVTGGKLRP. The helical transmembrane segment at 30-50 threads the bilayer; it reads FDLVLRVVALALTLVAAVLLG. Over 51 to 82 the chain is Extracellular; sequence VDKQTKVVSLQLLPTLPPMDVPVTAKWRYLSA. A helical membrane pass occupies residues 83–103; that stretch reads FVYFVVSNAIACSYAALSLLL. Residues 104–122 lie on the Cytoplasmic side of the membrane; that stretch reads SVGNSKGNKGLGLAITVMD. A helical membrane pass occupies residues 123-143; the sequence is LVMVALLFSSNGAAGAIGLMG. At 144–165 the chain is on the extracellular side; the sequence is YEGNSRVRWGKVCNVFGKFCNQ. Residues 166–186 traverse the membrane as a helical segment; the sequence is VAVALGLSFFGGLAFFLLVVM. Residues 187 to 195 are Cytoplasmic-facing; it reads AAFALNKRH.

The protein belongs to the Casparian strip membrane proteins (CASP) family. As to quaternary structure, homodimer and heterodimers.

The protein resides in the cell membrane. This is CASP-like protein 1E2 from Vitis vinifera (Grape).